Reading from the N-terminus, the 391-residue chain is 8-amino-7-oxononanoate synthase (391 aa).

R19 lines the substrate pocket. Pyridoxal 5'-phosphate is bound at residue 106–107 (GY). A substrate-binding site is contributed by H131. The pyridoxal 5'-phosphate site is built by S178, H206, and T234. Residue K237 is modified to N6-(pyridoxal phosphate)lysine. A substrate-binding site is contributed by T353.

It belongs to the class-II pyridoxal-phosphate-dependent aminotransferase family. BioF subfamily. In terms of assembly, homodimer. Pyridoxal 5'-phosphate is required as a cofactor.

It carries out the reaction 6-carboxyhexanoyl-[ACP] + L-alanine + H(+) = (8S)-8-amino-7-oxononanoate + holo-[ACP] + CO2. Its pathway is cofactor biosynthesis; biotin biosynthesis. Functionally, catalyzes the decarboxylative condensation of pimeloyl-[acyl-carrier protein] and L-alanine to produce 8-amino-7-oxononanoate (AON), [acyl-carrier protein], and carbon dioxide. The polypeptide is 8-amino-7-oxononanoate synthase (Pelobacter propionicus (strain DSM 2379 / NBRC 103807 / OttBd1)).